A 784-amino-acid polypeptide reads, in one-letter code: MAQLLNSILSVIDVFHKYAKGNGDCALLCKEELKQLLLAEFGDILQRPNDPETVETILNLLDQDRDGHIDFHEYLLLVFQLVQACYHKLDNKSHGGRTSQQERGQEGAQDCKFPGNTGRQHRQRHEEERQNSHHSQPERQDGDSHHGQPERQDRDSHHGQSEKQDRDSHHSQPERQDRDSHHNQSERQDKDFSFDQSERQSQDSSSGKKVSHKSTSGQAKWQGHIFALNRCEKPIQDSHYGQSERHTQQSETLGQASHFNQTNQQKSGSYCGQSERLGQELGCGQTDRQGQSSHYGQTDRQDQSYHYGQTDRQGQSSHYSQTDRQGQSSHYSQPDRQGQSSHYGQMDRKGQCYHYDQTNRQGQGSHYSQPNRQGQSSHYGQPDTQDQSSHYGQTDRQDQSSHYGQTERQGQSSHYSQMDRQGQGSHYGQTDRQGQSSHYGQPDRQGQNSHYGQTDRQGQSSHYGQTDRQGQSSHYSQPDKQGQSSHYGKIDRQDQSYHYGQPDGQGQSSHYGQTDRQGQSFHYGQPDRQGQSSHYSQMDRQGQSSHYGQTDRQGQSSHYGQTDRQGQSYHYGQTDRQGQSSHYIQSQTGEIQGQNKYFQGTEGTRKASYVEQSGRSGRLSQQTPGQEGYQNQGQGFQSRDSQQNGHQVWEPEEDSQHHQHKLLAQIQQERPLCHKGRDWQSCSSEQGHRQAQTRQSHGEGLSHWAEEEQGHQTWDRHSHESQEGPCGTQDRRTHKDEQNHQRRDRQTHEHEQSHQRRDRQTHEDKQNRQRRDRQTHEDEQNHQR.

The interval 1–91 (MAQLLNSILS…VQACYHKLDN (91 aa)) is S-100-like. EF-hand domains follow at residues 13-48 (DVFHKYAKGNGDCALLCKEELKQLLLAEFGDILQRP) and 49-84 (NDPETVETILNLLDQDRDGHIDFHEYLLLVFQLVQA). The Ca(2+) site is built by Glu32, Asp62, Asp64, Asp66, His68, and Glu73. Disordered stretches follow at residues 92 to 221 (KSHG…QAKW), 282 to 584 (GCGQ…SHYI), 601 to 661 (TEGT…HQHK), and 677 to 784 (RDWQ…NHQR). A compositionally biased stretch (basic and acidic residues) spans 124–201 (RHEEERQNSH…FSFDQSERQS (78 aa)). Polar residues-rich tracts occupy residues 286-296 (TDRQGQSSHYG), 304-343 (SYHYGQTDRQGQSSHYSQTDRQGQSSHYSQPDRQGQSSHY), 356-392 (DQTNRQGQGSHYSQPNRQGQSSHYGQPDTQDQSSHYG), 400-486 (SSHY…QSSH), 504-584 (GQGQ…SHYI), 610-646 (VEQSGRSGRLSQQTPGQEGYQNQGQGFQSRDSQQNGH), and 680-695 (QSCSSEQGHRQAQTRQ). 2 stretches are compositionally biased toward basic and acidic residues: residues 704–722 (WAEEEQGHQTWDRHSHESQ) and 729–784 (QDRR…NHQR).

It belongs to the S100-fused protein family. In terms of processing, potential substrate of transglutaminase. Some arginines are probably converted to citrullines by peptidylarginine deimidase. As to expression, expression is scattered in the normal epidermis but strong in the acrosyringium, the inner hair root sheath and in the filiform papilli of the tongue.

Its subcellular location is the secreted. It localises to the extracellular space. The protein localises to the extracellular matrix. Its function is as follows. Involved in the cornified cell envelope formation. Multifunctional epidermal matrix protein. Reversibly binds calcium. In Homo sapiens (Human), this protein is Repetin (RPTN).